Reading from the N-terminus, the 286-residue chain is MKQRLFILSQYLLPHHLLSRLIGCVAECRIGWLKNRLIAWFAKQYRVDMSEAQVEDLSAYEHFNAFFTRALKAGARPLDETPGAILCPADGAISQLGVIEHGRLFQAKGHSFSATELLGGDAERAAPFMGGQFATVYLSPKDYHRVHMPLAGTLKEMVYVPGRLFSVNQTTAENVPELFARNERVVCLFDTERGPMAVVLVGAMIVASVETVWAGLVTPPKRELKSTRYDAESRGPIELAKGAELGRFKLGSTAIVLFGPQQVQWAEELTAGSTVRMGQLLGNAQL.

Active-site charge relay system; for autoendoproteolytic cleavage activity residues include Asp90, His147, and Ser252. Residue Ser252 is the Schiff-base intermediate with substrate; via pyruvic acid; for decarboxylase activity of the active site. Residue Ser252 is modified to Pyruvic acid (Ser); by autocatalysis.

This sequence belongs to the phosphatidylserine decarboxylase family. PSD-B subfamily. Prokaryotic type I sub-subfamily. As to quaternary structure, heterodimer of a large membrane-associated beta subunit and a small pyruvoyl-containing alpha subunit. Requires pyruvate as cofactor. In terms of processing, is synthesized initially as an inactive proenzyme. Formation of the active enzyme involves a self-maturation process in which the active site pyruvoyl group is generated from an internal serine residue via an autocatalytic post-translational modification. Two non-identical subunits are generated from the proenzyme in this reaction, and the pyruvate is formed at the N-terminus of the alpha chain, which is derived from the carboxyl end of the proenzyme. The autoendoproteolytic cleavage occurs by a canonical serine protease mechanism, in which the side chain hydroxyl group of the serine supplies its oxygen atom to form the C-terminus of the beta chain, while the remainder of the serine residue undergoes an oxidative deamination to produce ammonia and the pyruvoyl prosthetic group on the alpha chain. During this reaction, the Ser that is part of the protease active site of the proenzyme becomes the pyruvoyl prosthetic group, which constitutes an essential element of the active site of the mature decarboxylase.

It localises to the cell membrane. It carries out the reaction a 1,2-diacyl-sn-glycero-3-phospho-L-serine + H(+) = a 1,2-diacyl-sn-glycero-3-phosphoethanolamine + CO2. The protein operates within phospholipid metabolism; phosphatidylethanolamine biosynthesis; phosphatidylethanolamine from CDP-diacylglycerol: step 2/2. Catalyzes the formation of phosphatidylethanolamine (PtdEtn) from phosphatidylserine (PtdSer). In Ectopseudomonas mendocina (strain ymp) (Pseudomonas mendocina), this protein is Phosphatidylserine decarboxylase proenzyme.